A 384-amino-acid polypeptide reads, in one-letter code: Putative ankyrin repeat protein L72 (384 aa).

ANK repeat units follow at residues 88–117, 119–146, 171–200, 202–231, 233–261, 298–324, and 325–357; these read ADMC…NIKN, GNLL…KEFS, DHNV…ILSV, DDSL…DIES, NNYC…NPNN, ILYQ…AGIK, and PTNS…DINV.

This Acanthamoeba polyphaga (Amoeba) protein is Putative ankyrin repeat protein L72.